The sequence spans 752 residues: Protein PHTF2 (752 aa).

One can recognise a PHTF domain in the interval 6-153 (TDARDWYQKK…VHCQIVSTRT (148 aa)). 2 consecutive transmembrane segments (helical) span residues 98-118 (VIFF…VLFC) and 126-146 (IPLT…TVHC). Disordered regions lie at residues 173–194 (HLEV…EGTV), 227–251 (NSID…GKSS), and 273–371 (STTT…SETE). Residues 182 to 194 (GSSTTDNTQEGTV) show a composition bias toward polar residues. Asn296 carries N-linked (GlcNAc...) asparagine glycosylation. Residues 327–337 (RNRKSHHYKKH) are compositionally biased toward basic residues. Residues 346-358 (SGTSCSSRCSSSR) show a composition bias toward low complexity. A compositionally biased stretch (basic and acidic residues) spans 359–368 (QDSESTRPES). The next 4 helical transmembrane spans lie at 464–484 (IGYQ…PFVF), 520–540 (VVIS…LLCV), 601–621 (VIVS…CAQL), and 635–655 (WELV…VTLG). 2 N-linked (GlcNAc...) asparagine glycosylation sites follow: Asn664 and Asn723. The chain crosses the membrane as a helical span at residues 727–747 (VVILSAVSGVISDLLGFNLKL).

Its subcellular location is the membrane. The chain is Protein PHTF2 (PHTF2) from Gallus gallus (Chicken).